We begin with the raw amino-acid sequence, 291 residues long: Lipoyl synthase, mitochondrial (291 aa).

Residues cysteine 45, cysteine 50, cysteine 56, cysteine 71, cysteine 75, cysteine 78, and serine 283 each coordinate [4Fe-4S] cluster. The region spanning 57 to 272 (WGEGTATFMI…EKIGKELGFR (216 aa)) is the Radical SAM core domain.

Belongs to the radical SAM superfamily. Lipoyl synthase family. [4Fe-4S] cluster serves as cofactor.

It is found in the mitochondrion. The catalysed reaction is [[Fe-S] cluster scaffold protein carrying a second [4Fe-4S](2+) cluster] + N(6)-octanoyl-L-lysyl-[protein] + 2 oxidized [2Fe-2S]-[ferredoxin] + 2 S-adenosyl-L-methionine + 4 H(+) = [[Fe-S] cluster scaffold protein] + N(6)-[(R)-dihydrolipoyl]-L-lysyl-[protein] + 4 Fe(3+) + 2 hydrogen sulfide + 2 5'-deoxyadenosine + 2 L-methionine + 2 reduced [2Fe-2S]-[ferredoxin]. It functions in the pathway protein modification; protein lipoylation via endogenous pathway; protein N(6)-(lipoyl)lysine from octanoyl-[acyl-carrier-protein]: step 2/2. Its function is as follows. Catalyzes the radical-mediated insertion of two sulfur atoms into the C-6 and C-8 positions of the octanoyl moiety bound to the lipoyl domains of lipoate-dependent enzymes, thereby converting the octanoylated domains into lipoylated derivatives. This Nematostella vectensis (Starlet sea anemone) protein is Lipoyl synthase, mitochondrial.